Consider the following 256-residue polypeptide: Imidazole glycerol phosphate synthase subunit HisF (256 aa).

Residues D12 and D131 contribute to the active site.

This sequence belongs to the HisA/HisF family. As to quaternary structure, heterodimer of HisH and HisF.

Its subcellular location is the cytoplasm. It carries out the reaction 5-[(5-phospho-1-deoxy-D-ribulos-1-ylimino)methylamino]-1-(5-phospho-beta-D-ribosyl)imidazole-4-carboxamide + L-glutamine = D-erythro-1-(imidazol-4-yl)glycerol 3-phosphate + 5-amino-1-(5-phospho-beta-D-ribosyl)imidazole-4-carboxamide + L-glutamate + H(+). It functions in the pathway amino-acid biosynthesis; L-histidine biosynthesis; L-histidine from 5-phospho-alpha-D-ribose 1-diphosphate: step 5/9. Its function is as follows. IGPS catalyzes the conversion of PRFAR and glutamine to IGP, AICAR and glutamate. The HisF subunit catalyzes the cyclization activity that produces IGP and AICAR from PRFAR using the ammonia provided by the HisH subunit. The chain is Imidazole glycerol phosphate synthase subunit HisF from Pseudomonas syringae pv. syringae (strain B728a).